The following is a 120-amino-acid chain: Alpha-amylase inhibitor Haim-2 (120 aa).

Positions 1–32 (MKRYVCSTFVACVMVLCVIPASGAAAHEAVAE) are cleaved as a signal peptide. 2 disulfides stabilise this stretch: Cys-43-Cys-59 and Cys-77-Cys-104.

Its function is as follows. Inhibits mammalian alpha-amylases specifically but has no action on plant and microbial alpha-amylases. The chain is Alpha-amylase inhibitor Haim-2 from Streptomyces griseosporeus.